A 252-amino-acid chain; its full sequence is 5-oxoprolinase subunit A 1 (252 aa).

The protein belongs to the LamB/PxpA family. As to quaternary structure, forms a complex composed of PxpA, PxpB and PxpC.

The catalysed reaction is 5-oxo-L-proline + ATP + 2 H2O = L-glutamate + ADP + phosphate + H(+). In terms of biological role, catalyzes the cleavage of 5-oxoproline to form L-glutamate coupled to the hydrolysis of ATP to ADP and inorganic phosphate. In Bordetella bronchiseptica (strain ATCC BAA-588 / NCTC 13252 / RB50) (Alcaligenes bronchisepticus), this protein is 5-oxoprolinase subunit A 1.